The primary structure comprises 635 residues: Probable potassium transport system protein Kup (635 aa).

12 consecutive transmembrane segments (helical) span residues 20 to 40 (MALV…SPLY), 62 to 82 (VLSL…VTII), 111 to 131 (AYVV…DGVI), 149 to 169 (PSLH…VFMV), 180 to 200 (VFGP…IWNI), 223 to 243 (GWHG…GEAL), 259 to 279 (WYFF…ALVL), 292 to 312 (AVPS…AVIA), 349 to 369 (IYVP…VLIF), 377 to 397 (VAYG…LALV), 408 to 428 (WVLP…IANG), and 429 to 449 (AKLL…FTLM).

Belongs to the HAK/KUP transporter (TC 2.A.72) family.

The protein localises to the cell inner membrane. The enzyme catalyses K(+)(in) + H(+)(in) = K(+)(out) + H(+)(out). Functionally, transport of potassium into the cell. Likely operates as a K(+):H(+) symporter. The polypeptide is Probable potassium transport system protein Kup (Xanthomonas campestris pv. campestris (strain 8004)).